A 533-amino-acid polypeptide reads, in one-letter code: Sterol 26-hydroxylase, mitochondrial (533 aa).

The transit peptide at 1–32 (MAVLSRMRLRWALLDTRVMGHGLCPQGARAKA) directs the protein to the mitochondrion. The interval 38–58 (LRDHESTEGPGTGQDRPRLRS) is disordered. 2 positions are modified to N6-acetyllysine: Lys142 and Lys375. The segment at 386 to 400 (PLLKAVIKETLRLYP) is sterol-binding. Cys479 contributes to the heme binding site. 2 positions are modified to N6-acetyllysine: Lys512 and Lys523.

Belongs to the cytochrome P450 family. Interacts with HSP70; this interaction is required for initial targeting to mitochondria. Requires heme as cofactor. Expressed in liver, kidney and ovary.

It is found in the mitochondrion inner membrane. The catalysed reaction is 5beta-cholestane-3alpha,7alpha,12alpha-triol + 6 reduced [adrenodoxin] + 3 O2 + 5 H(+) = (25R)-3alpha,7alpha,12alpha-trihydroxy-5beta-cholestan-26-oate + 6 oxidized [adrenodoxin] + 4 H2O. The enzyme catalyses cholestanol + 2 reduced [adrenodoxin] + O2 + 2 H(+) = (25R)-26-hydroxycholestanol + 2 oxidized [adrenodoxin] + H2O. It catalyses the reaction (25R)-3beta-hydroxycholest-5-en-7-one-26-al + 2 reduced [adrenodoxin] + O2 + H(+) = (25R)-3beta-hydroxycholest-5-en-7-one-26-oate + 2 oxidized [adrenodoxin] + H2O. It carries out the reaction (25R)-3beta,26-dihydroxycholest-5-en-7-one + 2 reduced [adrenodoxin] + O2 + 2 H(+) = (25R)-3beta-hydroxycholest-5-en-7-one-26-al + 2 oxidized [adrenodoxin] + 2 H2O. The catalysed reaction is 7-oxocholesterol + 2 reduced [adrenodoxin] + O2 + 2 H(+) = (25R)-3beta,26-dihydroxycholest-5-en-7-one + 2 oxidized [adrenodoxin] + H2O. The enzyme catalyses calciol + 2 reduced [adrenodoxin] + O2 + 2 H(+) = calcidiol + 2 oxidized [adrenodoxin] + H2O. It catalyses the reaction (25R)-5beta-cholestane-3alpha,7alpha,12alpha,26-tetrol + 2 reduced [adrenodoxin] + O2 + 2 H(+) = (25R)-3alpha,7alpha,12alpha-trihydroxy-5beta-cholestan-26-al + 2 oxidized [adrenodoxin] + 2 H2O. It carries out the reaction 2 reduced [adrenodoxin] + cholesterol + O2 + 2 H(+) = (25R)-cholest-5-ene-3beta,26-diol + 2 oxidized [adrenodoxin] + H2O. The catalysed reaction is (25R)-3beta,4beta-dihydroxycholest-5-en-26-al + 2 reduced [adrenodoxin] + O2 + H(+) = (25R)-3beta,4beta-dihydroxycholest-5-en-26-oate + 2 oxidized [adrenodoxin] + H2O. The enzyme catalyses (25R)-4beta,26-dihydroxycholesterol + 2 reduced [adrenodoxin] + O2 + 2 H(+) = (25R)-3beta,4beta-dihydroxycholest-5-en-26-al + 2 oxidized [adrenodoxin] + 2 H2O. It catalyses the reaction 4beta-hydroxycholesterol + 2 reduced [adrenodoxin] + O2 + 2 H(+) = (25R)-4beta,26-dihydroxycholesterol + 2 oxidized [adrenodoxin] + H2O. It carries out the reaction (25R)-3beta-hydroxy-5-cholesten-26-al + 2 reduced [adrenodoxin] + O2 + H(+) = (25R)-3beta-hydroxy-5-cholestenoate + 2 oxidized [adrenodoxin] + H2O. The catalysed reaction is (25R)-cholest-5-ene-3beta,26-diol + 2 reduced [adrenodoxin] + O2 + 2 H(+) = (25R)-3beta-hydroxy-5-cholesten-26-al + 2 oxidized [adrenodoxin] + 2 H2O. The enzyme catalyses (25R)-3alpha,7alpha,12alpha-trihydroxy-5beta-cholestan-26-al + 2 reduced [adrenodoxin] + O2 + H(+) = (25R)-3alpha,7alpha,12alpha-trihydroxy-5beta-cholestan-26-oate + 2 oxidized [adrenodoxin] + H2O. It catalyses the reaction 5beta-cholestane-3alpha,7alpha,12alpha-triol + 2 reduced [adrenodoxin] + O2 + 2 H(+) = (25R)-5beta-cholestane-3alpha,7alpha,12alpha,26-tetrol + 2 oxidized [adrenodoxin] + H2O. It participates in hormone biosynthesis; cholecalciferol biosynthesis. It functions in the pathway steroid metabolism; cholesterol degradation. The protein operates within lipid metabolism; bile acid biosynthesis. Functionally, cytochrome P450 monooxygenase that catalyzes regio- and stereospecific hydroxylation of cholesterol and its derivatives. Hydroxylates (with R stereochemistry) the terminal methyl group of cholesterol side-chain in a three step reaction to yield at first a C26 alcohol, then a C26 aldehyde and finally a C26 acid. Regulates cholesterol homeostasis by catalyzing the conversion of excess cholesterol to bile acids via both the 'neutral' (classic) and the 'acid' (alternative) pathways. May also regulate cholesterol homeostasis via generation of active oxysterols, which act as ligands for NR1H2 and NR1H3 nuclear receptors, modulating the transcription of genes involved in lipid metabolism. Plays a role in cholestanol metabolism in the cerebellum. Similarly to cholesterol, hydroxylates cholestanol and may facilitate sterol diffusion through the blood-brain barrier to the systemic circulation for further degradation. Also hydroxylates retinal 7-ketocholesterol, a noxious oxysterol with pro-inflammatory and pro-apoptotic effects, and may play a role in its elimination from the retinal pigment epithelium. May play a redundant role in vitamin D biosynthesis. Catalyzes 25-hydroxylation of vitamin D3 that is required for its conversion to a functionally active form. This Rattus norvegicus (Rat) protein is Sterol 26-hydroxylase, mitochondrial (Cyp27a1).